We begin with the raw amino-acid sequence, 383 residues long: tRNA(Met) cytidine acetate ligase (383 aa).

Residues 7–20 (IAEF…HEFL), Gly-101, Asn-153, and 178–179 (RI) contribute to the ATP site.

It belongs to the TmcAL family.

It localises to the cytoplasm. The enzyme catalyses cytidine(34) in elongator tRNA(Met) + acetate + ATP = N(4)-acetylcytidine(34) in elongator tRNA(Met) + AMP + diphosphate. Catalyzes the formation of N(4)-acetylcytidine (ac(4)C) at the wobble position of elongator tRNA(Met), using acetate and ATP as substrates. First activates an acetate ion to form acetyladenylate (Ac-AMP) and then transfers the acetyl group to tRNA to form ac(4)C34. This Lactobacillus acidophilus (strain ATCC 700396 / NCK56 / N2 / NCFM) protein is tRNA(Met) cytidine acetate ligase.